The sequence spans 528 residues: Na(+)/H(+) antiporter NhaB (528 aa).

The next 11 membrane-spanning stretches (helical) occupy residues 10 to 30, 63 to 83, 96 to 116, 131 to 165, 204 to 224, 240 to 260, 305 to 325, 359 to 379, 391 to 411, 449 to 469, and 476 to 496; these read IGNF…SFLI, YPLQ…MTSA, VLLL…LLLF, VSLM…FYAI, LLMH…VGEP, FVIR…LTCL, VLVG…VGLV, LAVF…APVI, LVIF…VFVG, ATPN…APLI, and MVWM…LAIE.

Belongs to the NhaB Na(+)/H(+) (TC 2.A.34) antiporter family.

It is found in the cell inner membrane. It catalyses the reaction 2 Na(+)(in) + 3 H(+)(out) = 2 Na(+)(out) + 3 H(+)(in). Its function is as follows. Na(+)/H(+) antiporter that extrudes sodium in exchange for external protons. This is Na(+)/H(+) antiporter NhaB from Shewanella putrefaciens (strain CN-32 / ATCC BAA-453).